The following is a 362-amino-acid chain: 3-isopropylmalate dehydrogenase (362 aa).

Glycine 77–glutamate 88 lines the NAD(+) pocket. Substrate contacts are provided by arginine 95, arginine 105, arginine 134, and aspartate 223. Mg(2+) contacts are provided by aspartate 223, aspartate 248, and aspartate 252. Glycine 287–asparagine 298 provides a ligand contact to NAD(+).

Belongs to the isocitrate and isopropylmalate dehydrogenases family. As to quaternary structure, homodimer. It depends on Mg(2+) as a cofactor. Requires Mn(2+) as cofactor.

The protein localises to the cytoplasm. The catalysed reaction is (2R,3S)-3-isopropylmalate + NAD(+) = 4-methyl-2-oxopentanoate + CO2 + NADH. Its pathway is amino-acid biosynthesis; L-leucine biosynthesis; L-leucine from 3-methyl-2-oxobutanoate: step 3/4. In terms of biological role, catalyzes the oxidation of 3-carboxy-2-hydroxy-4-methylpentanoate (3-isopropylmalate) to 3-carboxy-4-methyl-2-oxopentanoate. The product decarboxylates to 4-methyl-2 oxopentanoate. The sequence is that of 3-isopropylmalate dehydrogenase (LEU2) from Kluyveromyces lactis (strain ATCC 8585 / CBS 2359 / DSM 70799 / NBRC 1267 / NRRL Y-1140 / WM37) (Yeast).